Here is a 340-residue protein sequence, read N- to C-terminus: Lipopolysaccharide core biosynthesis glycosyltransferase LpsE (340 aa).

It belongs to the glycosyltransferase group 1 family. Glycosyltransferase 4 subfamily.

The protein operates within bacterial outer membrane biogenesis; LPS core biosynthesis. This is Lipopolysaccharide core biosynthesis glycosyltransferase LpsE (lpsE) from Rhizobium meliloti (strain 1021) (Ensifer meliloti).